The primary structure comprises 263 residues: 7beta-hydroxysteroid dehydrogenase (263 aa).

NADP(+) is bound by residues 17–21 (TEGVG), 40–41 (RR), and 66–67 (DF). The active-site Proton acceptor is Y156. S240 contributes to the NADP(+) binding site.

Belongs to the short-chain dehydrogenases/reductases (SDR) family. As to quaternary structure, homodimer.

It carries out the reaction a 7beta-hydroxysteroid + NADP(+) = a 7-oxosteroid + NADPH + H(+). It catalyses the reaction 7-oxolithocholate + NADPH + H(+) = ursodeoxycholate + NADP(+). The catalysed reaction is 7beta-hydroxy-3,12-dioxo-5beta-cholan-24-oate + NADP(+) = dehydrocholate + NADPH + H(+). The enzyme catalyses ursocholate + NADP(+) = 3alpha,12alpha-dihydroxy-7-oxo-5beta-cholanate + NADPH + H(+). Functionally, 7beta-hydroxysteroid dehydrogenase that catalyzes the reduction of the 7-oxo group of 7-oxo-lithocholate (7-oxo-LCA), to yield ursodeoxycholate (UDCA). As C.aerofaciens is an intestinal bacterium, this enzyme probably contributes to the formation of UDCA in the human colon. UDCA is regarded as a chemopreventive beneficial secondary bile acid due to its low hydrophobicity; it protects hepatocytes and bile duct epithelial cells against necrosis and apoptosis induced by more hydrophobic secondary bile acids like deoxycholate (DCA). This enzyme is also able to catalyze the reverse reaction, i.e. the oxidation of the 7beta-hydroxy group of UDCA to 7-oxo-LCA. To a lesser extent, is also active on the taurine- and glycine-conjugates of ursodeoxycholate. It is specific for NADPH/NADP(+) as the electron acceptor/donor since it is not active with NADH/NAD(+). In the presence of NADPH, 7beta-HSDH can also reduce dehydrocholate. And is also able to oxidize ursocholate. In Collinsella aerofaciens (strain ATCC 25986 / DSM 3979 / JCM 10188 / KCTC 3647 / NCTC 11838 / VPI 1003), this protein is 7beta-hydroxysteroid dehydrogenase.